The primary structure comprises 381 residues: MDLTDRRNPFNNLVFPPPPPPPSTTFTSPIFPRTSSSGTNFPILAIAVIGILATAFLLVSYYIFVIKCCLNWHQIDIFRRRRRSSDQNPLMIYSPHEVNRGLDESAIRAIPVFKFKKRDVVAGEEDQSKNSQECSVCLNEFQEDEKLRIIPNCCHVFHIDCIDIWLQGNANCPLCRTSVSCEASFTLDLISAPSSPRENSPHSRNRNLEPGLVLGGDDDFVVIELGASNGNNRESVRNIDFLTEQERVTSNEVSTGNSPKSVSPLPIKFGNRGMYKKERKFHKVTSMGDECIDTRGKDGHFGEIQPIRRSISMDSSVDRQLYLAVQEEISRRNRQIPVAGDGEDSSSSGGGNSRVMKRCFFSFGSSRTSKSSSILPVYLEP.

Positions methionine 1–phenylalanine 31 are disordered. Residues isoleucine 46 to isoleucine 66 form a helical membrane-spanning segment. The RING-type; atypical zinc-finger motif lies at cysteine 134–arginine 176. 2 disordered regions span residues threonine 249–phenylalanine 269 and arginine 334–arginine 354. Positions serine 250–serine 261 are enriched in polar residues.

This sequence belongs to the RING-type zinc finger family. ATL subfamily.

The protein resides in the membrane. The enzyme catalyses S-ubiquitinyl-[E2 ubiquitin-conjugating enzyme]-L-cysteine + [acceptor protein]-L-lysine = [E2 ubiquitin-conjugating enzyme]-L-cysteine + N(6)-ubiquitinyl-[acceptor protein]-L-lysine.. The protein operates within protein modification; protein ubiquitination. The chain is RING-H2 finger protein ATL1 (ATL1) from Arabidopsis thaliana (Mouse-ear cress).